Reading from the N-terminus, the 197-residue chain is HTH-type transcriptional regulator BetI (197 aa).

The HTH tetR-type domain occupies P8–L68. The H-T-H motif DNA-binding region spans S31 to F50.

Its pathway is amine and polyamine biosynthesis; betaine biosynthesis via choline pathway [regulation]. Repressor involved in the biosynthesis of the osmoprotectant glycine betaine. It represses transcription of the choline transporter BetT and the genes of BetAB involved in the synthesis of glycine betaine. This is HTH-type transcriptional regulator BetI from Pseudomonas syringae pv. tomato (strain ATCC BAA-871 / DC3000).